The following is a 219-amino-acid chain: GPI-anchored hemophore PGA7 (219 aa).

The signal sequence occupies residues 1–13 (MHFIFYLILLVSA). In terms of domain architecture, CFEM spans 17-126 (GNFGTYPKVP…SMLSTAAGDA (110 aa)). 4 cysteine pairs are disulfide-bonded: cysteine 45–cysteine 85, cysteine 49–cysteine 80, cysteine 59–cysteine 66, and cysteine 68–cysteine 101. A heme-binding site is contributed by aspartate 63. The interval 151–194 (VVSETGSASETGSSESAQSTTTGSSSTGSSSTDSSSSSSSSPSS) is disordered. Positions 153-194 (SETGSASETGSSESAQSTTTGSSSTGSSSTDSSSSSSSSPSS) are enriched in low complexity. Serine 194 carries GPI-anchor amidated serine lipidation. The propeptide at 195-219 (SANFAVLQTGGIGSVILGFMMYLLV) is removed in mature form.

The protein belongs to the RBT5 family. In terms of assembly, interacts with RBT5. In terms of processing, the GPI-anchor is attached to the protein in the endoplasmic reticulum and serves to target the protein to the cell surface. There, the glucosamine-inositol phospholipid moiety is cleaved off and the GPI-modified mannoprotein is covalently attached via its lipidless GPI glycan remnant to the 1,6-beta-glucan of the outer cell wall layer.

It is found in the secreted. The protein resides in the cell wall. It localises to the cell membrane. GPI-linked hyphal surface heme-binding protein involved in heme-iron utilization. Heme transfer occurs between PGA7, RBT5 and CSA2 supporting a model in which the 3 CFEM proteins cooperate in a heme-acquisition system and form a cross-cell wall heme-transfer cascade. The ability to acquire iron from host tissues is a major virulence factor of pathogenic microorganisms. Required for biofilm formation. The sequence is that of GPI-anchored hemophore PGA7 from Candida albicans (strain SC5314 / ATCC MYA-2876) (Yeast).